Consider the following 312-residue polypeptide: Methionyl-tRNA formyltransferase (312 aa).

109–112 provides a ligand contact to (6S)-5,6,7,8-tetrahydrofolate; sequence SLLP.

This sequence belongs to the Fmt family.

It carries out the reaction L-methionyl-tRNA(fMet) + (6R)-10-formyltetrahydrofolate = N-formyl-L-methionyl-tRNA(fMet) + (6S)-5,6,7,8-tetrahydrofolate + H(+). Attaches a formyl group to the free amino group of methionyl-tRNA(fMet). The formyl group appears to play a dual role in the initiator identity of N-formylmethionyl-tRNA by promoting its recognition by IF2 and preventing the misappropriation of this tRNA by the elongation apparatus. The protein is Methionyl-tRNA formyltransferase of Listeria innocua serovar 6a (strain ATCC BAA-680 / CLIP 11262).